The sequence spans 223 residues: Endonuclease V (223 aa).

Asp35 and Asp103 together coordinate Mg(2+).

The protein belongs to the endonuclease V family. It depends on Mg(2+) as a cofactor.

The protein resides in the cytoplasm. The catalysed reaction is Endonucleolytic cleavage at apurinic or apyrimidinic sites to products with a 5'-phosphate.. Functionally, DNA repair enzyme involved in the repair of deaminated bases. Selectively cleaves double-stranded DNA at the second phosphodiester bond 3' to a deoxyinosine leaving behind the intact lesion on the nicked DNA. This is Endonuclease V from Klebsiella pneumoniae subsp. pneumoniae (strain ATCC 700721 / MGH 78578).